Here is a 78-residue protein sequence, read N- to C-terminus: MYLNSNKKKLIIKNYGLSEYDTGNCIVQIALLTFKIKNITNHLKYNKKDFNTERSLQILVSKRKKLLKYIEKKNNTQL.

The protein belongs to the universal ribosomal protein uS15 family. As to quaternary structure, part of the 30S ribosomal subunit. Forms a bridge to the 50S subunit in the 70S ribosome, contacting the 23S rRNA.

In terms of biological role, one of the primary rRNA binding proteins, it binds directly to 16S rRNA where it helps nucleate assembly of the platform of the 30S subunit by binding and bridging several RNA helices of the 16S rRNA. Its function is as follows. Forms an intersubunit bridge (bridge B4) with the 23S rRNA of the 50S subunit in the ribosome. This chain is Small ribosomal subunit protein uS15, found in Karelsulcia muelleri (strain GWSS) (Sulcia muelleri).